The chain runs to 156 residues: Nuclear cap-binding protein subunit 2 (156 aa).

The residue at position 2 (Ser2) is an N-acetylserine. Ser13 and Ser18 each carry phosphoserine. MRNA is bound by residues Tyr20, Tyr43, 112 to 116 (RTDWD), 123 to 127 (RQYGR), and 133 to 134 (QV). The 79-residue stretch at 40 to 118 (CTLYVGNLSF…RIIRTDWDAG (79 aa)) folds into the RRM domain. Positions 124–156 (QYGRGRSGGQVRDEYREDYDAGRGGYGKLAQKQ) are disordered. The span at 134–144 (VRDEYREDYDA) shows a compositional bias: basic and acidic residues. An Omega-N-methylarginine modification is found at Arg146.

The protein belongs to the RRM NCBP2 family. Component of the nuclear cap-binding complex (CBC), a heterodimer composed of NCBP1/CBP80 and NCBP2/CBP20 that interacts with m7GpppG-capped RNA. Found in a U snRNA export complex with PHAX/RNUXA, NCBP1/CBP80, NCBP2/CBP20, RAN, XPO1 and m7G-capped RNA. Interacts with PHAX/RNUXA, EIF4G1, HNRNPF, HNRNPH1 and ALYREF/THOC4/ALY. Interacts with SRRT/ARS2 and KPNA3.

The protein resides in the nucleus. The protein localises to the cytoplasm. Functionally, component of the cap-binding complex (CBC), which binds co-transcriptionally to the 5' cap of pre-mRNAs and is involved in various processes such as pre-mRNA splicing, translation regulation, nonsense-mediated mRNA decay, RNA-mediated gene silencing (RNAi) by microRNAs (miRNAs) and mRNA export. The CBC complex is involved in mRNA export from the nucleus via its interaction with ALYREF/THOC4/ALY, leading to the recruitment of the mRNA export machinery to the 5' end of mRNA and to mRNA export in a 5' to 3' direction through the nuclear pore. The CBC complex is also involved in mediating U snRNA and intronless mRNAs export from the nucleus. The CBC complex is essential for a pioneer round of mRNA translation, before steady state translation when the CBC complex is replaced by cytoplasmic cap-binding protein eIF4E. The pioneer round of mRNA translation mediated by the CBC complex plays a central role in nonsense-mediated mRNA decay (NMD), NMD only taking place in mRNAs bound to the CBC complex, but not on eIF4E-bound mRNAs. The CBC complex enhances NMD in mRNAs containing at least one exon-junction complex (EJC) via its interaction with UPF1, promoting the interaction between UPF1 and UPF2. The CBC complex is also involved in 'failsafe' NMD, which is independent of the EJC complex, while it does not participate in Staufen-mediated mRNA decay (SMD). During cell proliferation, the CBC complex is also involved in microRNAs (miRNAs) biogenesis via its interaction with SRRT/ARS2, thereby being required for miRNA-mediated RNA interference. The CBC complex also acts as a negative regulator of PARN, thereby acting as an inhibitor of mRNA deadenylation. In the CBC complex, NCBP2/CBP20 recognizes and binds capped RNAs (m7GpppG-capped RNA) but requires NCBP1/CBP80 to stabilize the movement of its N-terminal loop and lock the CBC into a high affinity cap-binding state with the cap structure. The conventional cap-binding complex with NCBP2 binds both small nuclear RNA (snRNA) and messenger (mRNA) and is involved in their export from the nucleus. This chain is Nuclear cap-binding protein subunit 2 (Ncbp2), found in Mus musculus (Mouse).